Here is a 256-residue protein sequence, read N- to C-terminus: Cysteine-rich repeat secretory protein 29 (256 aa).

A signal peptide spans 1–26; that stretch reads MSSVFGSVHILAMIAIQLLLIHSVSS. Gnk2-homologous domains follow at residues 33 to 136 and 142 to 253; these read YLHH…SVAS and YEND…LYPF.

Belongs to the cysteine-rich repeat secretory protein family.

It localises to the secreted. The sequence is that of Cysteine-rich repeat secretory protein 29 (CRRSP29) from Arabidopsis thaliana (Mouse-ear cress).